The chain runs to 153 residues: Peptide deformylase (153 aa).

Residues C87 and H129 each coordinate Fe cation. Residue E130 is part of the active site. H133 serves as a coordination point for Fe cation.

Belongs to the polypeptide deformylase family. Requires Fe(2+) as cofactor.

It carries out the reaction N-terminal N-formyl-L-methionyl-[peptide] + H2O = N-terminal L-methionyl-[peptide] + formate. Its function is as follows. Removes the formyl group from the N-terminal Met of newly synthesized proteins. Requires at least a dipeptide for an efficient rate of reaction. N-terminal L-methionine is a prerequisite for activity but the enzyme has broad specificity at other positions. This is Peptide deformylase from Dictyoglomus turgidum (strain DSM 6724 / Z-1310).